Reading from the N-terminus, the 313-residue chain is MEKRKIILDCDPGHDDAIAIMMAAKHPAIDLLGITIVAGNQTLDKTLINGLNVCQKLEINVPVYAGMPQPIMRQQIVADNIHGETGLDGPVFEPLTRQAESTHAVKYIIDTLMASDGDITLVPVGPLSNIAVAMRMQPAILPKIREIVLMGGAYGTGNFTPSAEFNIFADPEAARVVFTSGVPLVMMGLDLTNQTVCTPDVIARMERAGGPAGELFSDIMNFTLKTQFENYGLAGGPVHDATCIGYLINPDGIKTQEMYVEVDVNSGPCYGRTVCDELGVLGKPANTKVGITIDTDWFWGLVEECVRGYIKTH.

Catalysis depends on aspartate 11, which acts as the Proton acceptor. Ca(2+) contacts are provided by aspartate 11, aspartate 16, and valine 124. Substrate-binding residues include glutamine 227 and histidine 239. Aspartate 240 is a binding site for Ca(2+).

The protein belongs to the IUNH family. RihB subfamily. As to quaternary structure, homotetramer. Ca(2+) serves as cofactor.

It catalyses the reaction a pyrimidine ribonucleoside + H2O = a pyrimidine nucleobase + D-ribose. Functionally, hydrolyzes cytidine or uridine to ribose and cytosine or uracil, respectively. Has a clear preference for cytidine over uridine. Strictly specific for ribonucleosides. In Escherichia coli (strain K12 / DH10B), this protein is Pyrimidine-specific ribonucleoside hydrolase RihB.